A 168-amino-acid chain; its full sequence is DNA-binding protein inhibitor ID-1 (168 aa).

One can recognise a bHLH domain in the interval 46–98; the sequence is LPALLDEQQVNVLLYDMNGCYSRLKELVPTLPQNRKVSKVEILQHVIDYIRDL. The interaction with IFI204 stretch occupies residues 53-106; the sequence is QQVNVLLYDMNGCYSRLKELVPTLPQNRKVSKVEILQHVIDYIRDLQLELNSES. The Nuclear export signal motif lies at 91–104; that stretch reads VIDYIRDLQLELNS.

As to quaternary structure, heterodimer with other HLH proteins. Interacts with CLOCK and BMAL1. Interacts with COPS5, IFI204, GATA4 and NKX2-5. Polyubiquitinated; which is favored by Ifi204 and leads to proteasomal degradation.

It is found in the cytoplasm. The protein resides in the nucleus. Transcriptional regulator (lacking a basic DNA binding domain) which negatively regulates the basic helix-loop-helix (bHLH) transcription factors by forming heterodimers and inhibiting their DNA binding and transcriptional activity. Implicated in regulating a variety of cellular processes, including cellular growth, senescence, differentiation, apoptosis, angiogenesis, and neoplastic transformation. Inhibits skeletal muscle and cardiac myocyte differentiation. Regulates the circadian clock by repressing the transcriptional activator activity of the CLOCK-BMAL1 heterodimer. In Mus musculus (Mouse), this protein is DNA-binding protein inhibitor ID-1 (Id1).